A 127-amino-acid chain; its full sequence is Glycine cleavage system H protein (127 aa).

The Lipoyl-binding domain occupies 24 to 106 (TVTVGITDHA…FEGAWIAKIK (83 aa)). N6-lipoyllysine is present on lysine 65.

This sequence belongs to the GcvH family. The glycine cleavage system is composed of four proteins: P, T, L and H. It depends on (R)-lipoate as a cofactor.

In terms of biological role, the glycine cleavage system catalyzes the degradation of glycine. The H protein shuttles the methylamine group of glycine from the P protein to the T protein. The polypeptide is Glycine cleavage system H protein (Marinomonas sp. (strain MWYL1)).